Consider the following 309-residue polypeptide: Early nodulin-75 (309 aa).

A signal peptide spans 1–25; it reads MTSVLHYSLLLLLLGVVILTTPVLA. A compositionally biased stretch (pro residues) spans 56–67; that stretch reads PPPVHHPPPEYQ. Residues 56–309 form a disordered region; that stretch reads PPPVHHPPPE…YGRYPPSKKN (254 aa). Composition is skewed to basic and acidic residues over residues 81–210 and 219–247; these read PHEK…EKPP and KPPH…HEKP. Composition is skewed to pro residues over residues 248–276 and 283–302; these read PPVY…VYPP and IYEP…PYGR.

This sequence belongs to the nodulin 75 family.

Functionally, involved in early stages of root nodule development. The sequence is that of Early nodulin-75 (ENOD2A) from Glycine max (Soybean).